A 906-amino-acid polypeptide reads, in one-letter code: Probable dipeptidyl-aminopeptidase B (906 aa).

Acidic residues predominate over residues 1–11 (MRSSEDREDSE). Residues 1 to 33 (MRSSEDREDSELLPANRPRSPSRSSYDSDDSGL) are disordered. Topologically, residues 1–85 (MRSSEDREDS…TKASSSRSRR (85 aa)) are cytoplasmic. Low complexity predominate over residues 21–33 (PSRSSYDSDDSGL). A helical; Signal-anchor for type II membrane protein membrane pass occupies residues 86-106 (LLWLVVLLCCGGWVVAFVLFI). The Vacuolar segment spans residues 107–906 (TQGRADYRTA…AKRVWPGFAH (800 aa)). Residues N338 and N629 are each glycosylated (N-linked (GlcNAc...) asparagine). Catalysis depends on S743, which acts as the Charge relay system. N797 is a glycosylation site (N-linked (GlcNAc...) asparagine). Active-site charge relay system residues include D820 and H853.

The protein belongs to the peptidase S9B family.

Its subcellular location is the vacuole membrane. It catalyses the reaction Release of an N-terminal dipeptide, Xaa-Yaa-|-Zaa-, from a polypeptide, preferentially when Yaa is Pro, provided Zaa is neither Pro nor hydroxyproline.. In terms of biological role, type IV dipeptidyl-peptidase which removes N-terminal dipeptides sequentially from polypeptides having unsubstituted N-termini provided that the penultimate residue is proline. This is Probable dipeptidyl-aminopeptidase B (dapB) from Emericella nidulans (strain FGSC A4 / ATCC 38163 / CBS 112.46 / NRRL 194 / M139) (Aspergillus nidulans).